An 821-amino-acid chain; its full sequence is Protein EFR3 homolog A (821 aa).

Phosphoserine is present on residues serine 360, serine 363, serine 422, and serine 694.

The protein belongs to the EFR3 family. As to quaternary structure, component of a phosphatidylinositol 4-kinase (PI4K) complex, composed of PI4KA, EFR3 (EFR3A or EFR3B), TTC7 (TTC7A or TTC7B) and HYCC (HYCC1 or HYCC2). Post-translationally, palmitoylated at its N-terminus, anchoring the protein to the plasma membrane.

It is found in the cell membrane. Its subcellular location is the cytoplasm. It localises to the cytosol. Component of a complex required to localize phosphatidylinositol 4-kinase (PI4K) to the plasma membrane. The complex acts as a regulator of phosphatidylinositol 4-phosphate (PtdIns(4)P) synthesis. In the complex, EFR3A probably acts as the membrane-anchoring component. Also involved in responsiveness to G-protein-coupled receptors; it is however unclear whether this role is direct or indirect. In Homo sapiens (Human), this protein is Protein EFR3 homolog A.